A 240-amino-acid chain; its full sequence is Late expression factor 5 homolog (240 aa).

The protein belongs to the baculoviridae LEF-5 family.

Required for late and very late gene expression. The sequence is that of Late expression factor 5 homolog from Tortricidae (ClGV).